Here is a 310-residue protein sequence, read N- to C-terminus: Homoserine kinase (310 aa).

91 to 101 provides a ligand contact to ATP; it reads PIGSGLGSSAC.

It belongs to the GHMP kinase family. Homoserine kinase subfamily.

It is found in the cytoplasm. It catalyses the reaction L-homoserine + ATP = O-phospho-L-homoserine + ADP + H(+). It participates in amino-acid biosynthesis; L-threonine biosynthesis; L-threonine from L-aspartate: step 4/5. In terms of biological role, catalyzes the ATP-dependent phosphorylation of L-homoserine to L-homoserine phosphate. This chain is Homoserine kinase, found in Sodalis glossinidius (strain morsitans).